A 426-amino-acid chain; its full sequence is Glutamate-1-semialdehyde 2,1-aminomutase (426 aa).

Position 263 is an N6-(pyridoxal phosphate)lysine (Lys-263).

It belongs to the class-III pyridoxal-phosphate-dependent aminotransferase family. HemL subfamily. Homodimer. Requires pyridoxal 5'-phosphate as cofactor.

It localises to the cytoplasm. The enzyme catalyses (S)-4-amino-5-oxopentanoate = 5-aminolevulinate. Its pathway is porphyrin-containing compound metabolism; protoporphyrin-IX biosynthesis; 5-aminolevulinate from L-glutamyl-tRNA(Glu): step 2/2. The sequence is that of Glutamate-1-semialdehyde 2,1-aminomutase from Dichelobacter nodosus (strain VCS1703A).